The following is a 278-amino-acid chain: Octanoyl-[GcvH]:protein N-octanoyltransferase (278 aa).

The region spanning 44 to 249 (SQSPPTLRAW…TLQQHGASLL (206 aa)) is the BPL/LPL catalytic domain. Cysteine 148 functions as the Acyl-thioester intermediate in the catalytic mechanism.

Belongs to the octanoyltransferase LipL family.

The enzyme catalyses N(6)-octanoyl-L-lysyl-[glycine-cleavage complex H protein] + L-lysyl-[lipoyl-carrier protein] = N(6)-octanoyl-L-lysyl-[lipoyl-carrier protein] + L-lysyl-[glycine-cleavage complex H protein]. It participates in protein modification; protein lipoylation via endogenous pathway; protein N(6)-(lipoyl)lysine from octanoyl-[acyl-carrier-protein]. Catalyzes the amidotransfer (transamidation) of the octanoyl moiety from octanoyl-GcvH to the lipoyl domain of the E2 subunit of lipoate-dependent enzymes. The chain is Octanoyl-[GcvH]:protein N-octanoyltransferase from Halalkalibacterium halodurans (strain ATCC BAA-125 / DSM 18197 / FERM 7344 / JCM 9153 / C-125) (Bacillus halodurans).